We begin with the raw amino-acid sequence, 248 residues long: Small ribosomal subunit protein eS1 (248 aa).

Residues 1-21 (MAVGKDKRISKGKKGGKKKIV) form a disordered region.

It belongs to the eukaryotic ribosomal protein eS1 family. As to quaternary structure, component of the small ribosomal subunit. Mature ribosomes consist of a small (40S) and a large (60S) subunit. The 40S subunit contains about 33 different proteins and 1 molecule of RNA (18S). The 60S subunit contains about 49 different proteins and 3 molecules of RNA (25S, 5.8S and 5S).

It is found in the cytoplasm. This is Small ribosomal subunit protein eS1 from Syntrichia ruralis (Great hairy screw-moss).